Consider the following 802-residue polypeptide: MDLKYSASHCNLSSDMKLRRFHQHRGKGREEEYDASSLSLNNLSKLILPPLGVASYNQNHIRSSGWIISPMDSRYRCWEFYMVLLVAYSAWVYPFEVAFLNSSPKRNLCIADNIVDLFFAVDIVLTFFVAYIDERTQLLVREPKQIAVRYLSTWFLMDVASTIPFDAIGYLITGTSTLNITCNLLGLLRFWRLRRVKHLFTRLEKDIRYSYFWIRCFRLLSVTLFLVHCAGCSYYLIADRYPHQGKTWTDAIPNFTETSLSIRYIAAIYWSITTMTTVGYGDLHASNTIEMVFITVYMLFNLGLTAYLIGNMTNLVVEGTRRTMEFRNSIEAASNFVNRNRLPPRLKDQILAYMCLRFKAESLNQQHLIDQLPKSIYKSICQHLFLPSVEKVYLFKGVSREILLLLVSKMKAEYIPPREDVIMQNEAPDDVYIIVSGEVEIIDSEMERESVLGTLRCGDIFGEVGALCCRPQSYTFQTKSLSQLLRLKTSFLIETMQIKQQDNATMLKNFLQHHKKLSNLDIGDLKAQQNGENTDVVPPNIASNLIAVVTTGNAALLDELLKAKLSPDITDSKGKTPLHVAASRGYEDCVLVLLKHGCNIHIRDVNGNSALWEAIISKHYEIFRILYHFAAISDPHIAGDLLCEAAKQNNVEVMKALLKQGLNVDTEDHHGVTALQVAMAEDQMDMVNLLATNGADVVCVNTHNEFTPLEKLRVVEEEEEEERGRVSIYRGHPLERRERSCNEAGKLILLPPSLDDLKKIAGEKFGFDGSETMVTNEDGAEIDSIEVIRDNDKLYFVVNKII.

The Cytoplasmic segment spans residues 1 to 79; that stretch reads MDLKYSASHC…PMDSRYRCWE (79 aa). The helical transmembrane segment at 80 to 100 threads the bilayer; it reads FYMVLLVAYSAWVYPFEVAFL. Topologically, residues 101–109 are extracellular; the sequence is NSSPKRNLC. Residues 110-130 traverse the membrane as a helical segment; it reads IADNIVDLFFAVDIVLTFFVA. Residues 131 to 153 are Cytoplasmic-facing; that stretch reads YIDERTQLLVREPKQIAVRYLST. A helical membrane pass occupies residues 154–174; the sequence is WFLMDVASTIPFDAIGYLITG. Over 175-183 the chain is Extracellular; that stretch reads TSTLNITCN. Asn179 carries an N-linked (GlcNAc...) asparagine glycan. Residues 184–204 traverse the membrane as a helical; Voltage-sensor segment; sequence LLGLLRFWRLRRVKHLFTRLE. Residues 205–218 lie on the Cytoplasmic side of the membrane; the sequence is KDIRYSYFWIRCFR. The chain crosses the membrane as a helical span at residues 219-239; that stretch reads LLSVTLFLVHCAGCSYYLIAD. Over 240 to 265 the chain is Extracellular; the sequence is RYPHQGKTWTDAIPNFTETSLSIRYI. An N-linked (GlcNAc...) asparagine glycan is attached at Asn254. The segment at residues 266 to 285 is an intramembrane region (pore-forming); that stretch reads AAIYWSITTMTTVGYGDLHA. Over 286–288 the chain is Extracellular; sequence SNT. The chain crosses the membrane as a helical span at residues 289–309; that stretch reads IEMVFITVYMLFNLGLTAYLI. Residues 310–802 are Cytoplasmic-facing; it reads GNMTNLVVEG…KLYFVVNKII (493 aa). 394 to 513 contributes to the a nucleoside 3',5'-cyclic phosphate binding site; it reads LFKGVSREIL…ATMLKNFLQH (120 aa). ANK repeat units lie at residues 540–569, 573–602, 606–636, 637–666, and 670–699; these read NIAS…SPDI, KGKT…NIHI, NGNS…SDPH, IAGD…NVDT, and HGVT…DVVC. Residues 725–802 enclose the KHA domain; that stretch reads RVSIYRGHPL…KLYFVVNKII (78 aa).

It belongs to the potassium channel family. Plant (TC 1.A.1.4) subfamily. In terms of assembly, the potassium channel is probably composed of a homo- or heterotetrameric complex of pore-forming subunits. Interacts with the phosphatase PPC2A and the kinase CIPK6. May interact with AKT1, KAT1 and KAT3. Interacts with SLAC1. Post-translationally, dephosphorylated by PP2CA. As to expression, expressed mainly in the phloem tissues throughout the plant but also, at a lower level, in leaf epiderm, mesophyll and guard cells.

The protein localises to the endoplasmic reticulum membrane. In terms of biological role, highly selective and weak inward-rectifying potassium channel. Plays a role in both loading and unloading potassium into/from the phloem sap. Seems to control sugar loading into phloem via a voltage-dependent process. Blocked by physiological concentrations of external calcium and by external acidification. May interact with the cytoskeleton or with regulatory proteins. Dephosphorylation by PP2CA not only leads to the inhibition of potassium currents but also to an increase of the voltage-dependence of the channel. Regulated by the CBL4/CIPK6 calcium sensor/protein kinase complex via a kinase interaction-dependent but phosphorylation-independent translocation of the channel to the plasma membrane. In Arabidopsis thaliana (Mouse-ear cress), this protein is Potassium channel AKT2/3 (AKT2).